The following is a 328-amino-acid chain: DNA repair and recombination protein RadA (328 aa).

118–125 contributes to the ATP binding site; that stretch reads GEYGSGKT.

The protein belongs to the eukaryotic RecA-like protein family.

Involved in DNA repair and in homologous recombination. Binds and assemble on single-stranded DNA to form a nucleoprotein filament. Hydrolyzes ATP in a ssDNA-dependent manner and promotes DNA strand exchange between homologous DNA molecules. The polypeptide is DNA repair and recombination protein RadA (Desulfurococcus amylolyticus (strain DSM 18924 / JCM 16383 / VKM B-2413 / 1221n) (Desulfurococcus kamchatkensis)).